We begin with the raw amino-acid sequence, 270 residues long: Hydroxyethylthiazole kinase (270 aa).

Residue Met-47 coordinates substrate. ATP contacts are provided by Arg-123 and Ser-170. Gly-197 contributes to the substrate binding site.

It belongs to the Thz kinase family. The cofactor is Mg(2+).

The enzyme catalyses 5-(2-hydroxyethyl)-4-methylthiazole + ATP = 4-methyl-5-(2-phosphooxyethyl)-thiazole + ADP + H(+). Its pathway is cofactor biosynthesis; thiamine diphosphate biosynthesis; 4-methyl-5-(2-phosphoethyl)-thiazole from 5-(2-hydroxyethyl)-4-methylthiazole: step 1/1. Catalyzes the phosphorylation of the hydroxyl group of 4-methyl-5-beta-hydroxyethylthiazole (THZ). The protein is Hydroxyethylthiazole kinase of Syntrophus aciditrophicus (strain SB).